Consider the following 287-residue polypeptide: MYSIYSGGFSLVRSLLKKYNIKGGTFDQHFLVDAGYLDRIVAAAELGPKDVVLEIGAGVGNLTERLAKKVKKVIAIELDPVLVRVLHDRFDKVGNIEIIAGDALKVEFPEFDKIVSNLPYSISSEITFKLLRHKFKLGILMYQYEFAARMVSQPNCKDYSRLTVDTCYFADASILMKVPKSAFQPAPEVDSAVIKLVPRPVPFEVKDQAFFMNFVSAVFSQRRKKLRNAILNTNYLLKIPNIKEVISRLPEDMMSKRAENLTPEELAQVANHIIDLKTSILANELNE.

H29, L31, G56, E77, D102, and N117 together coordinate S-adenosyl-L-methionine.

The protein belongs to the class I-like SAM-binding methyltransferase superfamily. rRNA adenine N(6)-methyltransferase family. RsmA subfamily.

It localises to the cytoplasm. Functionally, specifically dimethylates two adjacent adenosines in the loop of a conserved hairpin near the 3'-end of 16S rRNA in the 30S particle. May play a critical role in biogenesis of 30S subunits. This is Probable ribosomal RNA small subunit methyltransferase A from Methanosarcina barkeri (strain Fusaro / DSM 804).